The following is a 372-amino-acid chain: Molybdopterin synthase catalytic subunit (372 aa).

Residues 101-102 (HR), lysine 117, and 124-126 (KKE) contribute to the substrate site.

The protein belongs to the MoaE family. MOCS2B subfamily. As to quaternary structure, heterotetramer; composed of 2 small (Mocs2A) and 2 large (Mocs2B) subunits.

The protein localises to the cytoplasm. It carries out the reaction 2 [molybdopterin-synthase sulfur-carrier protein]-C-terminal-Gly-aminoethanethioate + cyclic pyranopterin phosphate + H2O = molybdopterin + 2 [molybdopterin-synthase sulfur-carrier protein]-C-terminal Gly-Gly + 2 H(+). The protein operates within cofactor biosynthesis; molybdopterin biosynthesis. Its function is as follows. Catalytic subunit of the molybdopterin synthase complex, a complex that catalyzes the conversion of precursor Z into molybdopterin. Acts by mediating the incorporation of 2 sulfur atoms from thiocarboxylated Mocs2A into precursor Z to generate a dithiolene group. The polypeptide is Molybdopterin synthase catalytic subunit (Drosophila willistoni (Fruit fly)).